A 2620-amino-acid polypeptide reads, in one-letter code: Ankyrin repeat and KH domain-containing protein mask-1 (2620 aa).

ANK repeat units lie at residues 254–283, 288–318, 361–390, 402–431, 437–466, 470–502, 507–536, 538–566, 568–597, 600–629, 634–663, and 667–697; these read SKITPLMEAAASSSETIVRRLLELGADPNV, NCNTALIYAASTDGRDVVREILMTEGPKKPD, ERDSALTLSAQKGHIKIVTAIMDYYEKNPP, ERYSALMEAAMEGHIDVCKLMLSRGTPADL, IEPSPLIVASAGGYPEVVEVLLAAGAKIEE, KKNTPLMEACAGDQGDQAGVVKLLLSKHAEVDV, TGDTPLSLAARNGYIAIMKMLIEKGGDLTA, KTSPIVEAARNGHLECIQFILAHCKTIPQ, QLSRALVSAADFGSLLIVEEVIRAGADLNF, DERTALMKAAKGDHFEVVQLLLSKGASVNF, NDATALSLACSEGNMEIAEFLIRNGADPML, and DGVNCFMEVARHGSIDLMSLLVEFTKGNMPM. Disordered stretches follow at residues 699 to 726, 994 to 1032, and 1192 to 1229; these read KDPPKLGITRCSSKNGKKRRKGMPSGQD, HQEERFGPSKPIPSGPKKTSLTAPNPADTSDVTTKQPGA, and SLMAKSVQSQQQQGQLRRTHSEGDGAERAKSRSNAIDK. Over residues 1012-1029 the composition is skewed to polar residues; the sequence is TSLTAPNPADTSDVTTKQ. The segment covering 1192-1206 has biased composition (low complexity); that stretch reads SLMAKSVQSQQQQGQ. Basic and acidic residues predominate over residues 1210–1221; it reads THSEGDGAERAK. ANK repeat units follow at residues 1234–1263, 1267–1296, 1301–1330, 1334–1363, 1369–1398, 1403–1432, 1436–1465, 1471–1500, 1504–1533, and 1537–1566; these read TLETPLTIACANGHKDIVELLLKEGANIEH, KGFSPLIIAATAGHSSVVEVLLKNHAAIEA, TKDTALSLACSGGRKDVVELLLAHGANKEH, SDYTPLSLASSGGYIEIVNMLLTAGSEINS, LGISPLMLASMNGHREATRVLLEKGSDINA, NRNTALTLASFQGRTEVVKLLLAYNANVEH, TGLTPLMECASGGYVDVGNLLIAAGADTNA, TKDTALTISAEKGHEKFVRMLLNGDAAVDV, KGCTALWLACNGGYLSTAQALLEKGADPDM, and RKISPMMAAFRKGHVEIVKYMVNSAKQFPN. Positions 1596-1648 form a coiled coil; that stretch reads AKKAQAESAELAAQKLLELIDEEKVQKEVKKQKQKDKKIKKKEEKKIKKQEAE. Disordered stretches follow at residues 1621–1720 and 1759–1804; these read QKEV…AEEP and KEGK…EIDT. Over residues 1636–1647 the composition is skewed to basic and acidic residues; that stretch reads KKEEKKIKKQEA. Acidic residues predominate over residues 1648–1661; that stretch reads EPEPEPEPEPEPVP. 2 stretches are compositionally biased toward low complexity: residues 1665-1681 and 1769-1791; these read PVVISEPVPEPVPIVVE and KSGYGAPSSAGSSQAKESSTTSS. The KH domain occupies 1807-1873; sequence ESSWKLTIPA…EMVRYAMNII (67 aa). Polar residues predominate over residues 1899-1913; that stretch reads ASSFSSEGTSKSAVD. Disordered stretches follow at residues 1899–1962, 1976–2010, 2067–2143, 2267–2294, 2307–2343, 2372–2391, 2429–2448, and 2496–2620; these read ASSF…GNVW, LMETKRISQSPKQAPQIPSTQQQSKLQSRQDQASE, SVQS…QTQN, NATSSPQGASTISSAPVQQPSTSSVTTG, SFAPSARDPNRSQPPLFARSQSNSVANSTSTNIQQQQ, QHQSQSSQQPSDLMSSKFSM, QESSTGAPGPTSSQLANSYY, and QKKQ…SSNW. Residues 1917-1946 are compositionally biased toward low complexity; it reads APSSIPKSLSSASIARQSASPIPQQSSQRS. The segment covering 1982–1993 has biased composition (polar residues); that stretch reads ISQSPKQAPQIP. Composition is skewed to low complexity over residues 1994–2006, 2067–2078, and 2100–2118; these read STQQQSKLQSRQD, SVQSVQHMQQQQ, and SQPISRPQSSVQVSQSSFS. Polar residues-rich tracts occupy residues 2267 to 2286 and 2325 to 2339; these read NATSSPQGASTISSAPVQQP and RSQSNSVANSTSTNI. Residues 2505–2528 are compositionally biased toward polar residues; sequence SFMHNSQQPQPFGAPSNASANQSR. The span at 2535 to 2547 shows a compositional bias: pro residues; it reads RPQPPPFVAPQAP. Over residues 2552–2565 the composition is skewed to polar residues; that stretch reads SLGNASSTTNPSRT. Low complexity-rich tracts occupy residues 2566-2588 and 2597-2620; these read SMQQMYQQYGQSSQQQPYGQMPQ and QQQQSASGQQNHQSSSSNKWSSNW.

Belongs to the mask family.

It localises to the cytoplasm. This Caenorhabditis elegans protein is Ankyrin repeat and KH domain-containing protein mask-1.